A 193-amino-acid chain; its full sequence is Interferon type A3 (193 aa).

The N-terminal stretch at 1–31 (MAVPASPQHPRGYGILLLTLLLKALATTASA) is a signal peptide. 3 disulfide bridges follow: C32–C129, C61–C155, and C68–C168. N65, N71, N108, and N186 each carry an N-linked (GlcNAc...) asparagine glycan.

It belongs to the alpha/beta interferon family.

It localises to the secreted. Functionally, has antiviral activities. The protein is Interferon type A3 (IFNA3) of Gallus gallus (Chicken).